A 249-amino-acid chain; its full sequence is Probable transcriptional regulatory protein Tgr7_2237 (249 aa).

This sequence belongs to the TACO1 family.

The protein localises to the cytoplasm. The sequence is that of Probable transcriptional regulatory protein Tgr7_2237 from Thioalkalivibrio sulfidiphilus (strain HL-EbGR7).